We begin with the raw amino-acid sequence, 309 residues long: HPr kinase/phosphorylase (309 aa).

Active-site residues include His138 and Lys159. 153 to 160 (GQSGVGKS) contributes to the ATP binding site. A Mg(2+)-binding site is contributed by Ser160. Asp177 functions as the Proton acceptor; for phosphorylation activity. Proton donor; for dephosphorylation activity in the catalytic mechanism. Residues 201–210 (LEIRGLGIIN) form an important for the catalytic mechanism of both phosphorylation and dephosphorylation region. Glu202 contributes to the Mg(2+) binding site. The active site involves Arg243. The important for the catalytic mechanism of dephosphorylation stretch occupies residues 264–269 (PVRPGR).

The protein belongs to the HPrK/P family. As to quaternary structure, homohexamer. It depends on Mg(2+) as a cofactor.

The catalysed reaction is [HPr protein]-L-serine + ATP = [HPr protein]-O-phospho-L-serine + ADP + H(+). The enzyme catalyses [HPr protein]-O-phospho-L-serine + phosphate + H(+) = [HPr protein]-L-serine + diphosphate. Its function is as follows. Catalyzes the ATP- as well as the pyrophosphate-dependent phosphorylation of a specific serine residue in HPr, a phosphocarrier protein of the phosphoenolpyruvate-dependent sugar phosphotransferase system (PTS). HprK/P also catalyzes the pyrophosphate-producing, inorganic phosphate-dependent dephosphorylation (phosphorolysis) of seryl-phosphorylated HPr (P-Ser-HPr). The two antagonistic activities of HprK/P are regulated by several intracellular metabolites, which change their concentration in response to the absence or presence of rapidly metabolisable carbon sources (glucose, fructose, etc.) in the growth medium. Also phosphorylates/dephosphorylates the HPr-like catabolite repression protein crh on a specific serine residue. Therefore, by controlling the phosphorylation state of HPr and crh, HPrK/P is a sensor enzyme that plays a major role in the regulation of carbon metabolism and sugar transport: it mediates carbon catabolite repression (CCR), and regulates PTS-catalyzed carbohydrate uptake and inducer exclusion. This is HPr kinase/phosphorylase from Bacillus cereus (strain B4264).